Reading from the N-terminus, the 290-residue chain is Transmembrane protein 33 homolog (290 aa).

2 disordered regions span residues 1–22 (MSSP…EFTG) and 39–72 (IDPN…SPRA). Residues 45 to 72 (SSNNTTTQRPSTSSSSRTSSSSTSSPRA) are compositionally biased toward low complexity. The next 4 helical transmembrane spans lie at 83 to 103 (LYGA…FYFI), 109 to 129 (FFYK…FNTF), 150 to 170 (FVFY…YLLP), and 218 to 238 (IVLI…LVFI).

Belongs to the PER33/POM33 family.

Its subcellular location is the membrane. In Dictyostelium discoideum (Social amoeba), this protein is Transmembrane protein 33 homolog (tmem33).